We begin with the raw amino-acid sequence, 481 residues long: Sucrose phosphorylase (481 aa).

Residues aspartate 49, histidine 87, 191-193 (RLD), glutamate 234, 291-292 (HD), 335-338 (DIYQ), and arginine 392 contribute to the sucrose site. The active-site Nucleophile is aspartate 193. Residue glutamate 234 is the Proton donor of the active site.

The protein belongs to the glycosyl hydrolase 13 family. Sucrose phosphorylase subfamily.

It localises to the cytoplasm. The enzyme catalyses sucrose + phosphate = D-fructose + alpha-D-glucose 1-phosphate. Its function is as follows. Intracellular catabolism of sucrose. Being intracellular, probably not involved in synthesis of extracellular polysaccharides. The protein is Sucrose phosphorylase of Streptococcus mutans serotype c (strain ATCC 700610 / UA159).